A 365-amino-acid polypeptide reads, in one-letter code: Putrescine carbamoyltransferase (365 aa).

Carbamoyl phosphate is bound by residues 54 to 58 (STRTR), Arg-105, and His-132. 277–280 (HCLP) serves as a coordination point for putrescine.

It belongs to the aspartate/ornithine carbamoyltransferase superfamily. PTCase family. In terms of assembly, homotrimer.

Its subcellular location is the cytoplasm. The enzyme catalyses carbamoyl phosphate + putrescine = N-carbamoylputrescine + phosphate + H(+). It participates in amine and polyamine biosynthesis; putrescine biosynthesis via agmatine pathway; putrescine from N-carbamoylputrescine (transferase route): step 1/1. Catalyzes the phosphorolysis of N-carbamoylputrescine to form carbamoyl phosphate and putrescine. Is involved in the degradation pathway of the polyamine agmatine. This chain is Putrescine carbamoyltransferase, found in Mycoplasma mycoides subsp. mycoides SC (strain CCUG 32753 / NCTC 10114 / PG1).